The primary structure comprises 475 residues: Dihydrolipoyl dehydrogenase (475 aa).

FAD is bound by residues 36–45 (ERYSTLGGVC), Lys54, and Gly117. A disulfide bridge links Cys45 with Cys50. NAD(+) is bound by residues 182-186 (GGGII), Glu205, Val238, and 270-273 (AIGR). Residues Asp313 and Ala321 each coordinate FAD. The active-site Proton acceptor is His445.

This sequence belongs to the class-I pyridine nucleotide-disulfide oxidoreductase family. FAD serves as cofactor.

It localises to the cytoplasm. It carries out the reaction N(6)-[(R)-dihydrolipoyl]-L-lysyl-[protein] + NAD(+) = N(6)-[(R)-lipoyl]-L-lysyl-[protein] + NADH + H(+). In terms of biological role, the branched-chain alpha-keto dehydrogenase complex catalyzes the overall conversion of alpha-keto acids to acyl-CoA and CO(2). It contains multiple copies of 3 enzymatic components: branched-chain alpha-keto acid decarboxylase (E1), lipoamide acyltransferase (E2) and lipoamide dehydrogenase (E3). The chain is Dihydrolipoyl dehydrogenase (lpd) from Vibrio parahaemolyticus serotype O3:K6 (strain RIMD 2210633).